Consider the following 248-residue polypeptide: Proteasome subunit alpha type-7 (248 aa).

S130 carries an O-linked (GlcNAc) serine glycan. Y153 is modified (phosphotyrosine; by ABL1 and ABL2). K227 carries the N6-acetyllysine modification.

Belongs to the peptidase T1A family. In terms of assembly, the 26S proteasome consists of a 20S proteasome core and two 19S regulatory subunits. The 20S proteasome core is a barrel-shaped complex made of 28 subunits that are arranged in four stacked rings. The two outer rings are each formed by seven alpha subunits, and the two inner rings are formed by seven beta subunits. The proteolytic activity is exerted by three beta-subunits PSMB5, PSMB6 and PSMB7. PSMA7 interacts directly with the PSMG1-PSMG2 heterodimer which promotes 20S proteasome assembly. Interacts with HIF1A. Interacts with RAB7A. Interacts with PRKN. Interacts with ABL1 and ABL2. Interacts with EMAP2. Interacts with MAVS. Post-translationally, phosphorylation by ABL1 or ABL2 leads to an inhibition of proteasomal activity and cell cycle transition blocks. Detected in liver (at protein level).

It localises to the cytoplasm. The protein localises to the nucleus. Its function is as follows. Component of the 20S core proteasome complex involved in the proteolytic degradation of most intracellular proteins. This complex plays numerous essential roles within the cell by associating with different regulatory particles. Associated with two 19S regulatory particles, forms the 26S proteasome and thus participates in the ATP-dependent degradation of ubiquitinated proteins. The 26S proteasome plays a key role in the maintenance of protein homeostasis by removing misfolded or damaged proteins that could impair cellular functions, and by removing proteins whose functions are no longer required. Associated with the PA200 or PA28, the 20S proteasome mediates ubiquitin-independent protein degradation. This type of proteolysis is required in several pathways including spermatogenesis (20S-PA200 complex) or generation of a subset of MHC class I-presented antigenic peptides (20S-PA28 complex). The protein is Proteasome subunit alpha type-7 (Psma7) of Mus musculus (Mouse).